The primary structure comprises 474 residues: Protein nucleotidyltransferase YdiU (474 aa).

Residues glycine 89, glycine 91, arginine 92, lysine 112, aspartate 124, glycine 125, arginine 178, and arginine 185 each coordinate ATP. The active-site Proton acceptor is aspartate 262. Mg(2+) contacts are provided by asparagine 263 and aspartate 272. An ATP-binding site is contributed by aspartate 272.

Belongs to the SELO family. Mg(2+) is required as a cofactor. Requires Mn(2+) as cofactor.

The enzyme catalyses L-seryl-[protein] + ATP = 3-O-(5'-adenylyl)-L-seryl-[protein] + diphosphate. It catalyses the reaction L-threonyl-[protein] + ATP = 3-O-(5'-adenylyl)-L-threonyl-[protein] + diphosphate. It carries out the reaction L-tyrosyl-[protein] + ATP = O-(5'-adenylyl)-L-tyrosyl-[protein] + diphosphate. The catalysed reaction is L-histidyl-[protein] + UTP = N(tele)-(5'-uridylyl)-L-histidyl-[protein] + diphosphate. The enzyme catalyses L-seryl-[protein] + UTP = O-(5'-uridylyl)-L-seryl-[protein] + diphosphate. It catalyses the reaction L-tyrosyl-[protein] + UTP = O-(5'-uridylyl)-L-tyrosyl-[protein] + diphosphate. Functionally, nucleotidyltransferase involved in the post-translational modification of proteins. It can catalyze the addition of adenosine monophosphate (AMP) or uridine monophosphate (UMP) to a protein, resulting in modifications known as AMPylation and UMPylation. The chain is Protein nucleotidyltransferase YdiU from Trichodesmium erythraeum (strain IMS101).